The chain runs to 343 residues: TATA box-binding protein-like 2 (343 aa).

Residues 71-152 (PDEVTQENKD…SDSLSLASIT (82 aa)) are disordered. Positions 76-90 (QENKDQPVISKHETE) are enriched in basic and acidic residues. Residues 94 to 127 (ESQSPQSRLPSPSEQDVGLGLNSSSLSNSHSQLH) are compositionally biased toward low complexity. A compositionally biased stretch (polar residues) spans 143–152 (SDSLSLASIT).

The protein belongs to the TBP family. As to quaternary structure, interacts with TAF3. Ubiquitously expressed in all tissues examined with highest levels in heart, lung, ovary, spleen and testes.

Its subcellular location is the cytoplasm. It is found in the nucleus. Its function is as follows. Transcription factor required in complex with TAF3 for the differentiation of myoblasts into myocytes. The complex replaces TFIID at specific promoters at an early stage in the differentiation process. This is TATA box-binding protein-like 2 from Homo sapiens (Human).